The following is a 707-amino-acid chain: DNA topoisomerase 1 (707 aa).

Residues 1 to 140 form the Toprim domain; it reads MYAILAEKPS…IKRLWTSSMT (140 aa). The Topo IA-type catalytic domain occupies 157 to 596; that stretch reads TLPLYYQAKA…HSKKLSSVLF (440 aa). The segment at 199 to 204 is interaction with DNA; sequence SLGRVQ. Tyrosine 323 acts as the O-(5'-phospho-DNA)-tyrosine intermediate in catalysis.

Belongs to the type IA topoisomerase family. As to quaternary structure, monomer.

It catalyses the reaction ATP-independent breakage of single-stranded DNA, followed by passage and rejoining.. In terms of biological role, releases the supercoiling and torsional tension of DNA, which is introduced during the DNA replication and transcription, by transiently cleaving and rejoining one strand of the DNA duplex. Introduces a single-strand break via transesterification at a target site in duplex DNA. The scissile phosphodiester is attacked by the catalytic tyrosine of the enzyme, resulting in the formation of a DNA-(5'-phosphotyrosyl)-enzyme intermediate and the expulsion of a 3'-OH DNA strand. The free DNA strand then undergoes passage around the unbroken strand, thus removing DNA supercoils. Finally, in the religation step, the DNA 3'-OH attacks the covalent intermediate to expel the active-site tyrosine and restore the DNA phosphodiester backbone. In Alkalihalophilus pseudofirmus (strain ATCC BAA-2126 / JCM 17055 / OF4) (Bacillus pseudofirmus), this protein is DNA topoisomerase 1 (topA).